Reading from the N-terminus, the 106-residue chain is Iron-sulfur cluster assembly protein CyaY (106 aa).

Belongs to the frataxin family.

Functionally, involved in iron-sulfur (Fe-S) cluster assembly. May act as a regulator of Fe-S biogenesis. This chain is Iron-sulfur cluster assembly protein CyaY, found in Salmonella heidelberg (strain SL476).